Here is a 622-residue protein sequence, read N- to C-terminus: uncharacterized protein (622 aa).

Residues C302, C306, C310, and C521 each contribute to the [4Fe-4S] cluster site.

This sequence belongs to the AOR/FOR family. [4Fe-4S] cluster is required as a cofactor.

This is an uncharacterized protein from Methanocaldococcus jannaschii (strain ATCC 43067 / DSM 2661 / JAL-1 / JCM 10045 / NBRC 100440) (Methanococcus jannaschii).